Here is a 329-residue protein sequence, read N- to C-terminus: MPPSVATHASLLLKAAAAAAHLHPKPFFSPRAAPPRIPSAPAPPAAGGSRYRPTTTTTAAATATSATAACRWFRWPPPAQAPVRGLCSLPHSGGGGGGGEGMGSEGVGRRRRVVAPAVNGVAKDGAPQPPPPKLLTLPTVLTIGRVAAVPLLISTFYMEGPWAATATTGIFLAAAVTDWLDGYIARKMQLGTPFGAFLDPVADKLMVAATLVLLCTKPLEISLLRDGPWLLTVPAIAIIGREITMSAVREWAASQNTKVLEAVAVNNLGKWKTATQMTALTILLASRDKSLPAQDALVTSGIALLYVSAGLAIWSLVVYMRKIWRILLK.

A mitochondrion-targeting transit peptide spans 1 to 34; sequence MPPSVATHASLLLKAAAAAAHLHPKPFFSPRAAP. A disordered region spans residues 27 to 55; it reads FFSPRAAPPRIPSAPAPPAAGGSRYRPTT. Pro residues predominate over residues 32–44; it reads AAPPRIPSAPAPP. Transmembrane regions (helical) follow at residues 134–154, 156–176, 194–214, 228–248, and 298–318; these read LLTL…LLIS, FYME…AAAV, FGAF…LVLL, PWLL…MSAV, and VTSG…SLVV. The Mitochondrial intermembrane segment spans residues 319-329; sequence YMRKIWRILLK.

Belongs to the CDP-alcohol phosphatidyltransferase class-I family. The cofactor is Mn(2+).

The protein localises to the mitochondrion inner membrane. The catalysed reaction is a CDP-1,2-diacyl-sn-glycerol + a 1,2-diacyl-sn-glycero-3-phospho-(1'-sn-glycerol) = a cardiolipin + CMP + H(+). Its function is as follows. Catalyzes the synthesis of cardiolipin (CL) (diphosphatidylglycerol) by specifically transferring a phosphatidyl group from CDP-diacylglycerol to phosphatidylglycerol (PG). CL is a key phospholipid in mitochondrial membranes and plays important roles in maintaining the functional integrity and dynamics of mitochondria under both optimal and stress conditions. The polypeptide is Cardiolipin synthase (CMP-forming) (Oryza sativa subsp. japonica (Rice)).